Reading from the N-terminus, the 914-residue chain is Isoleucine--tRNA ligase (914 aa).

Positions 64 to 74 match the 'HIGH' region motif; that stretch reads PYANGNFHLGH. Glutamate 557 contributes to the L-isoleucyl-5'-AMP binding site. The 'KMSKS' region motif lies at 598–602; it reads AMSKS. ATP is bound at residue lysine 601. Positions 889, 892, 906, and 909 each coordinate Zn(2+).

This sequence belongs to the class-I aminoacyl-tRNA synthetase family. IleS type 1 subfamily. In terms of assembly, monomer. The cofactor is Zn(2+).

The protein localises to the cytoplasm. The catalysed reaction is tRNA(Ile) + L-isoleucine + ATP = L-isoleucyl-tRNA(Ile) + AMP + diphosphate. Functionally, catalyzes the attachment of isoleucine to tRNA(Ile). As IleRS can inadvertently accommodate and process structurally similar amino acids such as valine, to avoid such errors it has two additional distinct tRNA(Ile)-dependent editing activities. One activity is designated as 'pretransfer' editing and involves the hydrolysis of activated Val-AMP. The other activity is designated 'posttransfer' editing and involves deacylation of mischarged Val-tRNA(Ile). The sequence is that of Isoleucine--tRNA ligase from Leptospira borgpetersenii serovar Hardjo-bovis (strain JB197).